The primary structure comprises 426 residues: Glucose-6-phosphate isomerase (426 aa).

The active-site Proton donor is Glu276. Active-site residues include His297 and Lys413.

This sequence belongs to the GPI family.

The protein resides in the cytoplasm. It catalyses the reaction alpha-D-glucose 6-phosphate = beta-D-fructose 6-phosphate. The protein operates within carbohydrate biosynthesis; gluconeogenesis. It participates in carbohydrate degradation; glycolysis; D-glyceraldehyde 3-phosphate and glycerone phosphate from D-glucose: step 2/4. Its function is as follows. Catalyzes the reversible isomerization of glucose-6-phosphate to fructose-6-phosphate. This is Glucose-6-phosphate isomerase from Mesoplasma florum (strain ATCC 33453 / NBRC 100688 / NCTC 11704 / L1) (Acholeplasma florum).